Reading from the N-terminus, the 118-residue chain is Vesicle-associated membrane protein 1 (118 aa).

Residues 1–36 form a disordered region; sequence MSAPAQPPAEGTEGTAPGGGPPGPPPNMTSNRRLQQ. Residues 1–96 are Cytoplasmic-facing; the sequence is MSAPAQPPAE…KRKYWWKNCK (96 aa). The region spanning 33 to 93 is the v-SNARE coiled-coil homology domain; the sequence is RLQQTQAQVE…AKLKRKYWWK (61 aa). Ser63 is modified (phosphoserine). Residues 97–116 traverse the membrane as a helical; Anchor for type IV membrane protein segment; it reads MMIMLGAICAIIVVVIVIYF. Residues 117–118 lie on the Vesicular side of the membrane; that stretch reads FT.

Belongs to the synaptobrevin family. Interacts with VAPA and VAPB. (Microbial infection) Targeted and hydrolyzed by C.botulinum neurotoxin type B (BoNT/B, botB) which probably hydrolyzes the 78-Gln-|-Phe-79 bond and inhibits neurotransmitter release. Post-translationally, (Microbial infection) Targeted and hydrolyzed by C.botulinum neurotoxin type D (BoNT/D, botD) which probably hydrolyzes the 61-Arg-|-Leu-62 bond and inhibits neurotransmitter release. BoNT/D has low catalytic activity on this protein due to its sequence. Note that humans are not known to be infected by C.botulinum type D. In terms of processing, (Microbial infection) Targeted and hydrolyzed by C.botulinum neurotoxin type F (BoNT/F, botF) which probably hydrolyzes the 60-Gln-|-Lys-61 bond and inhibits neurotransmitter release. (Microbial infection) Targeted and hydrolyzed by C.botulinum neurotoxin type X (BoNT/X) which probably hydrolyzes the 68-Arg-|-Ala-69 bond and inhibits neurotransmitter release. It remains unknown whether BoNT/X is ever produced, or what organisms it targets. Nervous system, skeletal muscle and adipose tissue.

The protein localises to the cytoplasmic vesicle. Its subcellular location is the secretory vesicle. It localises to the synaptic vesicle membrane. It is found in the synapse. The protein resides in the synaptosome. The protein localises to the cytoplasmic vesicle membrane. Its subcellular location is the mitochondrion outer membrane. Involved in the targeting and/or fusion of transport vesicles to their target membrane. This is Vesicle-associated membrane protein 1 (VAMP1) from Homo sapiens (Human).